Consider the following 388-residue polypeptide: Putative O-antigen polymerase (388 aa).

9 helical membrane passes run Ile23–Ile43, Leu57–Val77, Val97–Ser117, Asn143–Lys163, Ile180–Ile200, Val215–Leu235, Ile312–Trp332, Tyr338–His358, and Phe361–Phe381.

Its subcellular location is the cell inner membrane. May function in vitro as a polymerase that catalyzes the polymerization of the O-antigen repeat units on the periplasmic face of the inner membrane, leading to the formation of the lipid-linked O-antigen molecule. However, E.coli K12 strains do not normally produce the O-antigen in vivo due to mutations in the rfb gene cluster. K12 strains are phenotypically rough, their lipopolysaccharide having a complete core structure, but no O-antigen. The sequence is that of Putative O-antigen polymerase from Escherichia coli (strain K12).